Here is a 295-residue protein sequence, read N- to C-terminus: THO complex subunit 4C (295 aa).

Positions 1–67 (MSDALNMTLD…GPLAVNTRPS (67 aa)) are disordered. Ser-2 carries the post-translational modification N-acetylserine. Over residues 11–22 (EIVKKSKSERSA) the composition is skewed to basic and acidic residues. Residues 38–55 (GRGGPNGVVGGGRGGGPV) are compositionally biased toward gly residues. Positions 107–184 (TTVYITNLDQ…RPMKLEILGG (78 aa)) constitute an RRM domain. Residues 212–295 (QGVRGGRVGR…SYHAEAMNIS (84 aa)) are disordered. 2 stretches are compositionally biased toward gly residues: residues 213–227 (GVRGGRVGRGRGSGP) and 242–267 (VTAGRGGFRGRGRGNGGGRGNKSGGR). A compositionally biased stretch (basic and acidic residues) spans 271–288 (KPVEKSAADLDKDLESYH).

It belongs to the ALYREF family. In terms of assembly, interacts with PARP1.

The protein resides in the nucleus. It localises to the nucleoplasm. The protein localises to the nucleolus. In terms of biological role, export adapter involved in nuclear export of spliced and unspliced mRNA. This Arabidopsis thaliana (Mouse-ear cress) protein is THO complex subunit 4C.